A 248-amino-acid polypeptide reads, in one-letter code: Protein GrpE (248 aa).

The tract at residues 229–248 is disordered; the sequence is AAPKEDTLPAQENQSSPADS. Residues 238-248 are compositionally biased toward polar residues; sequence AQENQSSPADS.

Belongs to the GrpE family. As to quaternary structure, homodimer.

It is found in the cytoplasm. Participates actively in the response to hyperosmotic and heat shock by preventing the aggregation of stress-denatured proteins, in association with DnaK and GrpE. It is the nucleotide exchange factor for DnaK and may function as a thermosensor. Unfolded proteins bind initially to DnaJ; upon interaction with the DnaJ-bound protein, DnaK hydrolyzes its bound ATP, resulting in the formation of a stable complex. GrpE releases ADP from DnaK; ATP binding to DnaK triggers the release of the substrate protein, thus completing the reaction cycle. Several rounds of ATP-dependent interactions between DnaJ, DnaK and GrpE are required for fully efficient folding. The sequence is that of Protein GrpE from Nostoc sp. (strain PCC 7120 / SAG 25.82 / UTEX 2576).